The chain runs to 110 residues: Large ribosomal subunit protein uL22 (110 aa).

Belongs to the universal ribosomal protein uL22 family. In terms of assembly, part of the 50S ribosomal subunit.

In terms of biological role, this protein binds specifically to 23S rRNA; its binding is stimulated by other ribosomal proteins, e.g. L4, L17, and L20. It is important during the early stages of 50S assembly. It makes multiple contacts with different domains of the 23S rRNA in the assembled 50S subunit and ribosome. Its function is as follows. The globular domain of the protein is located near the polypeptide exit tunnel on the outside of the subunit, while an extended beta-hairpin is found that lines the wall of the exit tunnel in the center of the 70S ribosome. The protein is Large ribosomal subunit protein uL22 of Nitrosomonas europaea (strain ATCC 19718 / CIP 103999 / KCTC 2705 / NBRC 14298).